An 86-amino-acid polypeptide reads, in one-letter code: Putative membrane protein insertion efficiency factor (86 aa).

The segment at 66–86 (PLHEGGDDPVPPRKNDDNREN) is disordered.

Belongs to the UPF0161 family.

It localises to the cell inner membrane. Its function is as follows. Could be involved in insertion of integral membrane proteins into the membrane. The polypeptide is Putative membrane protein insertion efficiency factor (Proteus mirabilis (strain HI4320)).